The chain runs to 284 residues: 4-hydroxybenzoate octaprenyltransferase (284 aa).

7 consecutive transmembrane segments (helical) span residues 13-32, 90-110, 112-132, 134-154, 164-184, 200-220, and 224-244; these read FNRPIGSFLLMWPTLWALWL, ALMLFCALSILSFILVLFTDL, TILLSFVGLGLAALYPFMKRY, HLPQLFLGLAFSWAIPMAYSA, LWMLFVANCFWTIAYDTYYAM, ILFGQYDLFVIICLQGLTLSL, and IGLLAGLHWLYFVSLIVCVGL.

This sequence belongs to the UbiA prenyltransferase family. Mg(2+) is required as a cofactor.

It localises to the cell inner membrane. The enzyme catalyses all-trans-octaprenyl diphosphate + 4-hydroxybenzoate = 4-hydroxy-3-(all-trans-octaprenyl)benzoate + diphosphate. Its pathway is cofactor biosynthesis; ubiquinone biosynthesis. Functionally, catalyzes the prenylation of para-hydroxybenzoate (PHB) with an all-trans polyprenyl group. Mediates the second step in the final reaction sequence of ubiquinone-8 (UQ-8) biosynthesis, which is the condensation of the polyisoprenoid side chain with PHB, generating the first membrane-bound Q intermediate 3-octaprenyl-4-hydroxybenzoate. This Marinomonas sp. (strain MWYL1) protein is 4-hydroxybenzoate octaprenyltransferase.